Here is an 885-residue protein sequence, read N- to C-terminus: MDVEEDDLCLLTSLLEENEAVLPCSSEKDKSLSLGDGDPDEFDELFDADGDGESYTEEAGSGEEGKTGNQEERLATLFGDVEDLTDDEVATSKVGNSGPPPAPSQEKTSEELQDELKKLQEQMKSLQEQLKAASIKQPPGTAPLQEPPDSSLQPLLKEKRIRRIQESACFSAELDVPTLPKAKRVARKPKTPAESSSRMRTPAQPLQVSSSFLEPNHSSSSRSSTPSPQAVPGNKCSRTIRNQNTVSPGNSGDRPQQVSQVSVEAFSGLRLRRPRVSSTEMSRKMAGRKLIRLPQIKEKMATENLEETDWVTFGVILRKVTPQSATSGQTFSIWKLNDLHDLTQCVSLFLFGDVHKDLWKTEQGTVIGLLNANPMKPKDGLKEVCLSIDHPQKVLIMGEAMDLGACKAKKKNGEPCTQTVNLHDCEYCQYHIQAQYKKLSAKRTDLQSTFSGGRIPKKFRKGTSLKERLCQDGFYYGGVSSESFAASRAAAIAPKKKVQTTLTNLVVRGTNSIIQETKQKLGIPQKSLSCSEEFRELMALPTFGARNLQKHLARAKASGSSKPAIQSISASALLKQQKQQMLEMRKRRSEDIQKRFLQSSSEVQSPAVPSSSRQAAAQSPRTGAEFPRLEGTATPRMPKLGRGISEGDDVLFFDDSPPPRPKLSAAAEAKKLAAIAKLRAKGQILTKVDPNNTVRKQMDGRAMLGVKERVENSNTVSPEEELEPARKKRREQLAYLESEEFQKILKAKSKHTDILKEAEAELQKSYFEPLVKKEQMEEKMRATREVKCRVVTCRTCTYTHFKPLETCVSEQHNLHWHDGVKRFFKCPCGNRTISLDKLPNKHCRNCGLYKWERDGMLKEKTGPKIGGETLLPRGEEHAKFLNSLK.

The interval 1-153 (MDVEEDDLCL…LQEPPDSSLQ (153 aa)) is N-terminal domain. The segment at 23–260 (PCSSEKDKSL…SGDRPQQVSQ (238 aa)) is disordered. A compositionally biased stretch (acidic residues) spans 37 to 56 (GDPDEFDELFDADGDGESYT). Over residues 63–74 (EEGKTGNQEERL) the composition is skewed to basic and acidic residues. The span at 80–89 (DVEDLTDDEV) shows a compositional bias: acidic residues. Phosphothreonine is present on threonine 85. Positions 101 to 139 (PAPSQEKTSEELQDELKKLQEQMKSLQEQLKAASIKQPP) form a coiled coil. Positions 107 to 121 (KTSEELQDELKKLQE) are enriched in basic and acidic residues. Basic residues predominate over residues 181 to 190 (KAKRVARKPK). The segment covering 193-217 (AESSSRMRTPAQPLQVSSSFLEPNH) has biased composition (polar residues). Low complexity predominate over residues 218–228 (SSSSRSSTPSP). Over residues 236-260 (CSRTIRNQNTVSPGNSGDRPQQVSQ) the composition is skewed to polar residues. The segment at 251–405 (SGDRPQQVSQ…IMGEAMDLGA (155 aa)) is OB-fold domain. The interval 406–431 (CKAKKKNGEPCTQTVNLHDCEYCQYH) is zinc finger-like 1. The interval 579–642 (QQMLEMRKRR…ATPRMPKLGR (64 aa)) is disordered. Residues 603 to 621 (VQSPAVPSSSRQAAAQSPR) show a composition bias toward low complexity. Residue lysine 639 forms a Glycyl lysine isopeptide (Lys-Gly) (interchain with G-Cter in SUMO2) linkage. Serine 656 is modified (phosphoserine). Glycyl lysine isopeptide (Lys-Gly) (interchain with G-Cter in SUMO2) cross-links involve residues lysine 772 and lysine 773. Zinc finger-like stretches follow at residues 793–812 (CRTC…SEQH) and 826–846 (CPCG…CRNC).

The protein belongs to the MCM10 family. In terms of assembly, self-associates. Interacts with ORC2. May interact with MCM2 and MCM6. Interacts with the DNA polymerase alpha subunit POLA1. Interacts with RECQL4; this interaction regulates RECQL4 unwinding activity. Interacts with WDHD1.

The protein resides in the nucleus. Functionally, acts as a replication initiation factor that brings together the MCM2-7 helicase and the DNA polymerase alpha/primase complex in order to initiate DNA replication. Additionally, plays a role in preventing DNA damage during replication. Key effector of the RBBP6 and ZBTB38-mediated regulation of DNA-replication and common fragile sites stability; acts as a direct target of transcriptional repression by ZBTB38. In Mus musculus (Mouse), this protein is Protein MCM10 homolog (Mcm10).